Reading from the N-terminus, the 242-residue chain is NAD-dependent protein deacetylase 1 (242 aa).

Residues 1–242 enclose the Deacetylase sirtuin-type domain; sequence MTITSWLAAS…LNEQLAEVDP (242 aa). Residues Ala19, Thr23, Phe30, Arg31, Gln97, Val99, Asp100, and His115 each coordinate NAD(+). A nicotinamide-binding site is contributed by Phe30. 2 residues coordinate nicotinamide: Val99 and Asp100. The active-site Proton acceptor is the His115. Zn(2+)-binding residues include Cys123, Cys126, Cys142, and Cys144. 4 residues coordinate NAD(+): Ser182, Ser183, Asn207, and Ile226.

It belongs to the sirtuin family. Class U subfamily. It depends on Zn(2+) as a cofactor.

It is found in the cytoplasm. It carries out the reaction N(6)-acetyl-L-lysyl-[protein] + NAD(+) + H2O = 2''-O-acetyl-ADP-D-ribose + nicotinamide + L-lysyl-[protein]. In terms of biological role, NAD-dependent protein deacetylase which modulates the activities of several enzymes which are inactive in their acetylated form. The polypeptide is NAD-dependent protein deacetylase 1 (Geobacillus kaustophilus (strain HTA426)).